The primary structure comprises 327 residues: DNA polymerase III subunit delta' (327 aa).

DNA polymerase III contains a core (composed of alpha, epsilon and theta chains) that associates with a tau subunit. This core dimerizes to form the POLIII' complex. PolIII' associates with the gamma complex (composed of gamma, delta, delta', psi and chi chains) and with the beta chain to form the complete DNA polymerase III complex.

The catalysed reaction is DNA(n) + a 2'-deoxyribonucleoside 5'-triphosphate = DNA(n+1) + diphosphate. DNA polymerase III is a complex, multichain enzyme responsible for most of the replicative synthesis in bacteria. This DNA polymerase also exhibits 3' to 5' exonuclease activity. This chain is DNA polymerase III subunit delta' (holB), found in Haemophilus influenzae (strain ATCC 51907 / DSM 11121 / KW20 / Rd).